The following is a 384-amino-acid chain: 5-amino-6-(D-ribitylamino)uracil--L-tyrosine 4-hydroxyphenyl transferase 2 (384 aa).

In terms of domain architecture, Radical SAM core spans 53–286 (VSYVVNRNIY…IAISRVILHT (234 aa)). The [4Fe-4S] cluster site is built by cysteine 67, cysteine 71, and cysteine 74.

Belongs to the radical SAM superfamily. CofH family. As to quaternary structure, consists of two subunits, CofG and CofH. The cofactor is [4Fe-4S] cluster.

The catalysed reaction is 5-amino-6-(D-ribitylamino)uracil + L-tyrosine + S-adenosyl-L-methionine = 5-amino-5-(4-hydroxybenzyl)-6-(D-ribitylimino)-5,6-dihydrouracil + 2-iminoacetate + 5'-deoxyadenosine + L-methionine + H(+). It functions in the pathway cofactor biosynthesis; coenzyme F0 biosynthesis. In terms of biological role, catalyzes the radical-mediated synthesis of 5-amino-5-(4-hydroxybenzyl)-6-(D-ribitylimino)-5,6-dihydrouracil from 5-amino-6-(D-ribitylamino)uracil and L-tyrosine. The polypeptide is 5-amino-6-(D-ribitylamino)uracil--L-tyrosine 4-hydroxyphenyl transferase 2 (Methanosarcina barkeri (strain Fusaro / DSM 804)).